A 307-amino-acid chain; its full sequence is Ventral anterior homeobox 2 (307 aa).

Disordered stretches follow at residues 1-70 (MFDQ…DKLL), 155-175 (RTKQ…STSE), and 197-254 (PPPN…PSPR). The span at 25–38 (CRDRGRESKSRTEV) shows a compositional bias: basic and acidic residues. A compositionally biased stretch (low complexity) spans 46-62 (SSTDTPGTSASTPTSSS). Residues 103 to 162 (PKRTRTSFTAEQLYRLELEFQRCQYVVGRERTELARQLNLSETQVKVWFQNRRTKQKKDQ) constitute a DNA-binding region (homeobox). The span at 159-170 (KKDQTKDTDKRS) shows a compositional bias: basic and acidic residues. Low complexity predominate over residues 202 to 249 (LLAHPHPGNGSLLGSPSVSTSSGVSSSTTPPGAGSGTFGLSLSSLSGT).

The protein belongs to the EMX homeobox family. In terms of tissue distribution, expressed in the anterior neural keel and later in the preoptic area, optic stalk and ventral retina.

Its subcellular location is the nucleus. Its function is as follows. Transcription factor that may function in dorsoventral specification of the forebrain. Required for closure of the choroid fissure and together with vax1 is required for optic nerve differentiation and to limit retinal development to the optic cup. In Danio rerio (Zebrafish), this protein is Ventral anterior homeobox 2 (vax2).